The chain runs to 112 residues: Small ribosomal subunit protein bS6 (112 aa).

The protein belongs to the bacterial ribosomal protein bS6 family.

Its function is as follows. Binds together with bS18 to 16S ribosomal RNA. This Chlamydia trachomatis serovar L2 (strain ATCC VR-902B / DSM 19102 / 434/Bu) protein is Small ribosomal subunit protein bS6.